The following is a 347-amino-acid chain: Protein RecA (347 aa).

64–71 (GPESSGKT) contributes to the ATP binding site.

The protein belongs to the RecA family.

It localises to the cytoplasm. In terms of biological role, can catalyze the hydrolysis of ATP in the presence of single-stranded DNA, the ATP-dependent uptake of single-stranded DNA by duplex DNA, and the ATP-dependent hybridization of homologous single-stranded DNAs. It interacts with LexA causing its activation and leading to its autocatalytic cleavage. This is Protein RecA from Bacillus velezensis (strain DSM 23117 / BGSC 10A6 / LMG 26770 / FZB42) (Bacillus amyloliquefaciens subsp. plantarum).